A 287-amino-acid polypeptide reads, in one-letter code: Ribosomal RNA small subunit methyltransferase A (287 aa).

The S-adenosyl-L-methionine site is built by Asn18, Leu20, Gly45, Glu66, Asp91, and Asn118.

It belongs to the class I-like SAM-binding methyltransferase superfamily. rRNA adenine N(6)-methyltransferase family. RsmA subfamily.

The protein localises to the cytoplasm. The enzyme catalyses adenosine(1518)/adenosine(1519) in 16S rRNA + 4 S-adenosyl-L-methionine = N(6)-dimethyladenosine(1518)/N(6)-dimethyladenosine(1519) in 16S rRNA + 4 S-adenosyl-L-homocysteine + 4 H(+). In terms of biological role, specifically dimethylates two adjacent adenosines (A1518 and A1519) in the loop of a conserved hairpin near the 3'-end of 16S rRNA in the 30S particle. May play a critical role in biogenesis of 30S subunits. In Haemophilus influenzae (strain PittEE), this protein is Ribosomal RNA small subunit methyltransferase A.